Here is a 316-residue protein sequence, read N- to C-terminus: Methionyl-tRNA formyltransferase (316 aa).

Residue 112–115 (SLLP) coordinates (6S)-5,6,7,8-tetrahydrofolate.

Belongs to the Fmt family.

The catalysed reaction is L-methionyl-tRNA(fMet) + (6R)-10-formyltetrahydrofolate = N-formyl-L-methionyl-tRNA(fMet) + (6S)-5,6,7,8-tetrahydrofolate + H(+). In terms of biological role, attaches a formyl group to the free amino group of methionyl-tRNA(fMet). The formyl group appears to play a dual role in the initiator identity of N-formylmethionyl-tRNA by promoting its recognition by IF2 and preventing the misappropriation of this tRNA by the elongation apparatus. This Actinobacillus pleuropneumoniae serotype 7 (strain AP76) protein is Methionyl-tRNA formyltransferase.